We begin with the raw amino-acid sequence, 865 residues long: Envelope glycoprotein gp160 (865 aa).

Residues 1 to 20 (MRYTIITLGIIVIGIGIVLS) form the signal peptide. The Extracellular portion of the chain corresponds to 21–705 (KQWITVFYGI…SKWLNILKMG (685 aa)). The N-linked (GlcNAc...) asparagine; by host glycan is linked to Asn-35. Cys-42 and Cys-55 are oxidised to a cystine. 20 N-linked (GlcNAc...) asparagine; by host glycosylation sites follow: Asn-68, Asn-117, Asn-150, Asn-165, Asn-195, Asn-198, Asn-210, Asn-252, Asn-255, Asn-266, Asn-276, Asn-282, Asn-294, Asn-306, Asn-316, Asn-373, Asn-414, Asn-451, Asn-488, and Asn-491. Cystine bridges form between Cys-101–Cys-218, Cys-108–Cys-209, Cys-113–Cys-166, Cys-231–Cys-261, and Cys-241–Cys-253. Residues 113 to 165 (CVELNSTRERATTPTTTPKSTGLPCVGPTSGENLQSCNASIIEREMEDEPASN) form a V1 region. A V2 region spans residues 166 to 209 (CTFAMAGYVRDQKKNYYSVVWNDAEIYCKNKTNSTSKECYMIHC). The tract at residues 311 to 343 (CRRPGNKTVLPVTIMAGLVFHSQKYNMKLRQAW) is V3. Cys-311 and Cys-344 are oxidised to a cystine. An intrachain disulfide couples Cys-396 to Cys-471. Residues 403 to 444 (CKMDWFLNYLNNKTWDAYHNFCSSKKKGHAPGPCVQRTYVAY) form a V4 region. Residues 487 to 494 (KNRTNVTL) are V5. The segment at 537–557 (VPFVLGFLGFLGAAGTAMGAA) is fusion peptide. Residues 600–616 (LNARVTALEKYLEDQAR) form an immunosuppression region. Residues Asn-645 and Asn-661 are each glycosylated (N-linked (GlcNAc...) asparagine; by host). A coiled-coil region spans residues 650–675 (EWERQIADLESNITGQLVKAREQEEK). An MPER; binding to GalCer region spans residues 682–703 (KLTSWSDFWSWFDFSKWLNILK). The chain crosses the membrane as a helical span at residues 706–726 (FLVIVGIIGLRLLYTVYGCIV). Residues 727–865 (RVRQGYVPLS…VRQGLEEILN (139 aa)) are Cytoplasmic-facing. Residues 732–735 (YVPL) carry the YXXL motif; contains endocytosis signal motif. Residues 744 to 763 (VGKGRPDNADEPGEGGDNSR) are disordered.

The mature envelope protein (Env) consists of a homotrimer of non-covalently associated gp120-gp41 heterodimers. The resulting complex protrudes from the virus surface as a spike. Interacts with host CD4 and CCR5. Gp120 also interacts with the C-type lectins CD209/DC-SIGN and CLEC4M/DC-SIGNR (collectively referred to as DC-SIGN(R)). As to quaternary structure, the mature envelope protein (Env) consists of a homotrimer of non-covalently associated gp120-gp41 heterodimers. The resulting complex protrudes from the virus surface as a spike. Post-translationally, specific enzymatic cleavages in vivo yield mature proteins. Envelope glycoproteins are synthesized as an inactive precursor that is heavily N-glycosylated and processed likely by host cell furin in the Golgi to yield the mature SU and TM proteins. The cleavage site between SU and TM requires the minimal sequence [KR]-X-[KR]-R.

Its subcellular location is the virion membrane. The protein resides in the host cell membrane. It is found in the host endosome membrane. In terms of biological role, the surface protein gp120 (SU) attaches the virus to the host lymphoid cell by binding to the primary receptor CD4. This interaction induces a structural rearrangement creating a high affinity binding site for a chemokine coreceptor like CCR5. This peculiar 2 stage receptor-interaction strategy allows gp120 to maintain the highly conserved coreceptor-binding site in a cryptic conformation, protected from neutralizing antibodies. These changes are transmitted to the transmembrane protein gp41 and are thought to activate its fusogenic potential by unmasking its fusion peptide. Surface protein gp120 (SU) may target the virus to gut-associated lymphoid tissue (GALT) by binding host ITGA4/ITGB7 (alpha-4/beta-7 integrins), a complex that mediates T-cell migration to the GALT. Interaction between gp120 and ITGA4/ITGB7 would allow the virus to enter GALT early in the infection, infecting and killing most of GALT's resting CD4+ T-cells. This T-cell depletion is believed to be the major insult to the host immune system leading to AIDS. Functionally, the surface protein gp120 is a ligand for CD209/DC-SIGN and CLEC4M/DC-SIGNR, which are respectively found on dendritic cells (DCs), and on endothelial cells of liver sinusoids and lymph node sinuses. These interactions allow capture of viral particles at mucosal surfaces by these cells and subsequent transmission to permissive cells. DCs are professional antigen presenting cells, critical for host immunity by inducing specific immune responses against a broad variety of pathogens. They act as sentinels in various tissues where they take up antigen, process it, and present it to T-cells following migration to lymphoid organs. SIV subverts the migration properties of dendritic cells to gain access to CD4+ T-cells in lymph nodes. Virus transmission to permissive T-cells occurs either in trans (without DCs infection, through viral capture and transmission), or in cis (following DCs productive infection, through the usual CD4-gp120 interaction), thereby inducing a robust infection. In trans infection, bound virions remain infectious over days and it is proposed that they are not degraded, but protected in non-lysosomal acidic organelles within the DCs close to the cell membrane thus contributing to the viral infectious potential during DCs' migration from the periphery to the lymphoid tissues. On arrival at lymphoid tissues, intact virions recycle back to DCs' cell surface allowing virus transmission to CD4+ T-cells. Virion capture also seems to lead to MHC-II-restricted viral antigen presentation, and probably to the activation of SIV-specific CD4+ cells. Its function is as follows. The transmembrane protein gp41 (TM) acts as a class I viral fusion protein. Under the current model, the protein has at least 3 conformational states: pre-fusion native state, pre-hairpin intermediate state, and post-fusion hairpin state. During fusion of viral and target intracellular membranes, the coiled coil regions (heptad repeats) assume a trimer-of-hairpins structure, positioning the fusion peptide in close proximity to the C-terminal region of the ectodomain. The formation of this structure appears to drive apposition and subsequent fusion of viral and target cell membranes. Complete fusion occurs in host cell endosomes. The virus undergoes clathrin-dependent internalization long before endosomal fusion, thus minimizing the surface exposure of conserved viral epitopes during fusion and reducing the efficacy of inhibitors targeting these epitopes. Membranes fusion leads to delivery of the nucleocapsid into the cytoplasm. In terms of biological role, the envelope glycoprotein gp160 precursor down-modulates cell surface CD4 antigen by interacting with it in the endoplasmic reticulum and blocking its transport to the cell surface. The gp120-gp41 heterodimer allows rapid transcytosis of the virus through CD4 negative cells such as simple epithelial monolayers of the intestinal, rectal and endocervical epithelial barriers. Both gp120 and gp41 specifically recognize glycosphingolipids galactosyl-ceramide (GalCer) or 3' sulfo-galactosyl-ceramide (GalS) present in the lipid rafts structures of epithelial cells. Binding to these alternative receptors allows the rapid transcytosis of the virus through the epithelial cells. This transcytotic vesicle-mediated transport of virions from the apical side to the basolateral side of the epithelial cells does not involve infection of the cells themselves. The protein is Envelope glycoprotein gp160 (env) of Simian immunodeficiency virus agm.vervet (isolate AGM TYO-1) (SIV-agm.ver).